The chain runs to 238 residues: Modulator of macroautophagy TMEM150B (238 aa).

The Cytoplasmic segment spans residues 1 to 8 (MWNYLSLL). A helical transmembrane segment spans residues 9–29 (PVILFLWAIAGIWIVFAIAVV). N-linked (GlcNAc...) asparagine glycosylation occurs at Asn-30. The Extracellular portion of the chain corresponds to 30 to 51 (NGSVDLNEGFPFISICGSYAPQ). A helical transmembrane segment spans residues 52–72 (SCIFGQVLNIGAALTVWICIV). At 73–86 (RHHQLRDWGVKTWQ) the chain is on the cytoplasmic side. Residues 87–107 (NQLILWSGILCALGTSIVGNF) traverse the membrane as a helical segment. At 108–116 (QDKNQKPTH) the chain is on the extracellular side. A helical transmembrane segment spans residues 117–137 (LAGAFLAFILGNLYFWLQFFL). Residues 138–156 (SWWVKGLPQPGPHWIKSLR) lie on the Cytoplasmic side of the membrane. A helical transmembrane segment spans residues 157 to 177 (LSLCSLSTILIVAMIVLHALH). The Extracellular segment spans residues 178 to 186 (MRSASAICE). A helical membrane pass occupies residues 187–207 (WVVAMLLFMLFGFFAVDFSIL). Over 208 to 238 (RGCTLHLHPRLDSSLPQAPSGSPNIQMAQVL) the chain is Cytoplasmic.

This sequence belongs to the DRAM/TMEM150 family.

The protein localises to the cell membrane. The protein resides in the endosome membrane. It localises to the cytoplasmic vesicle. It is found in the autophagosome membrane. Its function is as follows. Modulator of macroautophagy that causes accumulation of autophagosomes under basal conditions and enhances autophagic flux. Represses cell death and promotes long-term clonogenic survival of cells grown in the absence of glucose in a macroautophagy-independent manner. May have some role in extracellular matrix engulfment or growth factor receptor recycling, both of which can modulate cell survival. The polypeptide is Modulator of macroautophagy TMEM150B (Mus musculus (Mouse)).